Here is a 272-residue protein sequence, read N- to C-terminus: Indole-3-glycerol phosphate synthase (272 aa).

It belongs to the TrpC family.

The catalysed reaction is 1-(2-carboxyphenylamino)-1-deoxy-D-ribulose 5-phosphate + H(+) = (1S,2R)-1-C-(indol-3-yl)glycerol 3-phosphate + CO2 + H2O. The protein operates within amino-acid biosynthesis; L-tryptophan biosynthesis; L-tryptophan from chorismate: step 4/5. This is Indole-3-glycerol phosphate synthase from Mycobacterium sp. (strain JLS).